The primary structure comprises 106 residues: UPF0060 membrane protein CHU_3331 (106 aa).

Transmembrane regions (helical) follow at residues 5–25, 31–51, 59–79, and 85–105; these read FYFI…WLHF, ALLL…LTKI, AYAV…YGIE, and IWDY…LFAP.

The protein belongs to the UPF0060 family.

The protein localises to the cell inner membrane. The chain is UPF0060 membrane protein CHU_3331 from Cytophaga hutchinsonii (strain ATCC 33406 / DSM 1761 / CIP 103989 / NBRC 15051 / NCIMB 9469 / D465).